The sequence spans 198 residues: Protein hunchback (198 aa).

Disordered stretches follow at residues 16–111 (SHHH…LPGL) and 152–198 (NDKL…KYMA). A compositionally biased stretch (basic residues) spans 17–31 (HHHHHHHAHHSHHQH). Low complexity-rich tracts occupy residues 35–46 (SNSNSNASSPHQ) and 56–83 (SNTNLQLEQYLKQQQQQQQQQQQQQQQQ). Over residues 95-105 (PSPSNNDQNSP) the composition is skewed to polar residues. Over residues 179–198 (EPEKEHDLMSNSSEDMKYMA) the composition is skewed to basic and acidic residues.

This sequence belongs to the hunchback C2H2-type zinc-finger protein family.

It is found in the nucleus. Gap class segmentation protein that controls development of head structures. The protein is Protein hunchback (hb) of Drosophila lineosetae (Fruit fly).